A 590-amino-acid chain; its full sequence is Glutamine--tRNA ligase (590 aa).

The short motif at 55 to 65 (PEPNGYLHIGH) is the 'HIGH' region element. ATP is bound by residues 56-58 (EPN) and 62-68 (HIGHAKS). Residues Asp-93 and Tyr-238 each contribute to the L-glutamine site. ATP is bound by residues Thr-257 and 292–293 (RL). A 'KMSKS' region motif is present at residues 299–303 (ITSKR).

The protein belongs to the class-I aminoacyl-tRNA synthetase family. In terms of assembly, monomer.

The protein localises to the cytoplasm. It carries out the reaction tRNA(Gln) + L-glutamine + ATP = L-glutaminyl-tRNA(Gln) + AMP + diphosphate. The sequence is that of Glutamine--tRNA ligase from Polynucleobacter necessarius subsp. necessarius (strain STIR1).